Here is a 79-residue protein sequence, read N- to C-terminus: MKFNNKKNTFKKRRKVCFFTENKVTKIDFKDIELLQRFITDRGRILSRRVTNTSAKWQRQLAIAIKRARHMALIPFIQQ.

Belongs to the bacterial ribosomal protein bS18 family. Part of the 30S ribosomal subunit. Forms a tight heterodimer with protein bS6.

In terms of biological role, binds as a heterodimer with protein bS6 to the central domain of the 16S rRNA, where it helps stabilize the platform of the 30S subunit. The protein is Small ribosomal subunit protein bS18 of Onion yellows phytoplasma (strain OY-M).